We begin with the raw amino-acid sequence, 398 residues long: Putative transposase y4qJ (398 aa).

It belongs to the transposase 32 family.

This is Putative transposase y4qJ from Sinorhizobium fredii (strain NBRC 101917 / NGR234).